A 234-amino-acid polypeptide reads, in one-letter code: Leucyl/phenylalanyl-tRNA--protein transferase (234 aa).

This sequence belongs to the L/F-transferase family.

It localises to the cytoplasm. The enzyme catalyses N-terminal L-lysyl-[protein] + L-leucyl-tRNA(Leu) = N-terminal L-leucyl-L-lysyl-[protein] + tRNA(Leu) + H(+). It carries out the reaction N-terminal L-arginyl-[protein] + L-leucyl-tRNA(Leu) = N-terminal L-leucyl-L-arginyl-[protein] + tRNA(Leu) + H(+). It catalyses the reaction L-phenylalanyl-tRNA(Phe) + an N-terminal L-alpha-aminoacyl-[protein] = an N-terminal L-phenylalanyl-L-alpha-aminoacyl-[protein] + tRNA(Phe). Functionally, functions in the N-end rule pathway of protein degradation where it conjugates Leu, Phe and, less efficiently, Met from aminoacyl-tRNAs to the N-termini of proteins containing an N-terminal arginine or lysine. The chain is Leucyl/phenylalanyl-tRNA--protein transferase from Escherichia coli O157:H7 (strain EC4115 / EHEC).